The primary structure comprises 932 residues: Leucine--tRNA ligase (932 aa).

The short motif at 38 to 48 is the 'HIGH' region element; sequence PYLNGNLHAGH. The 'KMSKS' region signature appears at 630-634; that stretch reads KMSKS. Lys-633 is an ATP binding site.

It belongs to the class-I aminoacyl-tRNA synthetase family.

It is found in the cytoplasm. It carries out the reaction tRNA(Leu) + L-leucine + ATP = L-leucyl-tRNA(Leu) + AMP + diphosphate. The polypeptide is Leucine--tRNA ligase (Archaeoglobus fulgidus (strain ATCC 49558 / DSM 4304 / JCM 9628 / NBRC 100126 / VC-16)).